The following is a 215-amino-acid chain: Large ribosomal subunit protein uL4 (215 aa).

The disordered stretch occupies residues Thr46 to Arg72. The segment covering Ser56 to Ala71 has biased composition (gly residues).

This sequence belongs to the universal ribosomal protein uL4 family. As to quaternary structure, part of the 50S ribosomal subunit.

Functionally, one of the primary rRNA binding proteins, this protein initially binds near the 5'-end of the 23S rRNA. It is important during the early stages of 50S assembly. It makes multiple contacts with different domains of the 23S rRNA in the assembled 50S subunit and ribosome. In terms of biological role, forms part of the polypeptide exit tunnel. The protein is Large ribosomal subunit protein uL4 of Helicobacter pylori (strain J99 / ATCC 700824) (Campylobacter pylori J99).